The chain runs to 509 residues: Photosystem II CP47 reaction center protein (509 aa).

A run of 6 helical transmembrane segments spans residues 21–36, 101–115, 140–156, 203–218, 237–252, and 457–472; these read AVHL…WAGS, IVLS…IWHW, GIHL…FGAF, IAAG…FHLT, VLSS…AFVT, and NFAL…HGSR.

It belongs to the PsbB/PsbC family. PsbB subfamily. PSII is composed of 1 copy each of membrane proteins PsbA, PsbB, PsbC, PsbD, PsbE, PsbF, PsbH, PsbI, PsbJ, PsbK, PsbL, PsbM, PsbT, PsbX, PsbY, PsbZ, Psb30/Ycf12, at least 3 peripheral proteins of the oxygen-evolving complex and a large number of cofactors. It forms dimeric complexes. Requires Binds multiple chlorophylls. PSII binds additional chlorophylls, carotenoids and specific lipids. as cofactor.

It is found in the plastid. Its subcellular location is the chloroplast thylakoid membrane. In terms of biological role, one of the components of the core complex of photosystem II (PSII). It binds chlorophyll and helps catalyze the primary light-induced photochemical processes of PSII. PSII is a light-driven water:plastoquinone oxidoreductase, using light energy to abstract electrons from H(2)O, generating O(2) and a proton gradient subsequently used for ATP formation. This chain is Photosystem II CP47 reaction center protein, found in Pyropia yezoensis (Susabi-nori).